Consider the following 69-residue polypeptide: Neurotoxin Cex7 (69 aa).

Alanine 1 is a signal peptide. The 66-residue stretch at 2 to 67 (REGYLVSKST…TYPIPGKSCG (66 aa)) folds into the LCN-type CS-alpha/beta domain. Disulfide bonds link cysteine 13/cysteine 66, cysteine 17/cysteine 42, cysteine 26/cysteine 47, and cysteine 30/cysteine 49. Cysteine 66 carries the post-translational modification Cysteine amide. A propeptide spanning residues 67 to 69 (GKK) is cleaved from the precursor.

Belongs to the long (4 C-C) scorpion toxin superfamily. Sodium channel inhibitor family. Beta subfamily. In terms of tissue distribution, expressed by the venom gland.

The protein localises to the secreted. Beta toxins bind voltage-independently at site-4 of sodium channels (Nav) and shift the voltage of activation toward more negative potentials thereby affecting sodium channel activation and promoting spontaneous and repetitive firing. The polypeptide is Neurotoxin Cex7 (Centruroides exilicauda (Bark scorpion)).